The chain runs to 216 residues: MKTGILGGTFNPVHVAHLRIAEEVRDTFALDRVLFIPAASPPHKAMEGEVPFETRCAMVRLATADNHAFAVSDMEGGRPGKSYSVDTIRALKEEYPGDEFFFIIGSDSFLDIGSWYDYEAIFASCNLVVAARPGAEAADLLAALPVAITAQFCYYPAEKRLAHRSGYSVYWLAGVPLDISSRSIRGLARLGRSIRYLVPEAVERYINEQRIYAHDG.

This sequence belongs to the NadD family.

It carries out the reaction nicotinate beta-D-ribonucleotide + ATP + H(+) = deamido-NAD(+) + diphosphate. Its pathway is cofactor biosynthesis; NAD(+) biosynthesis; deamido-NAD(+) from nicotinate D-ribonucleotide: step 1/1. In terms of biological role, catalyzes the reversible adenylation of nicotinate mononucleotide (NaMN) to nicotinic acid adenine dinucleotide (NaAD). The sequence is that of Probable nicotinate-nucleotide adenylyltransferase from Geobacter sulfurreducens (strain ATCC 51573 / DSM 12127 / PCA).